A 470-amino-acid chain; its full sequence is Pancreatic lipase-related protein 2 (470 aa).

Residues 1–18 (MMLFVWTTGLLLLATARG) form the signal peptide. A disulfide bridge connects residues Cys-22 and Cys-28. The tract at residues 94–106 (IHGFIDNGEKDWL) is required for galactolipase activity. The cysteines at positions 110 and 121 are disulfide-linked. Ser-172 serves as the catalytic Nucleophile. Asp-196 serves as the catalytic Charge relay system. Ca(2+)-binding residues include Glu-207, Arg-210, Asp-212, and Asp-215. Cys-257 and Cys-281 are joined by a disulfide. A required for galactolipase activity region spans residues 258–280 (EKNIISTIVDVNGFLEGITSLAA). His-283 (charge relay system) is an active-site residue. Intrachain disulfides connect Cys-305–Cys-316 and Cys-319–Cys-324. N-linked (GlcNAc...) asparagine glycosylation is found at Asn-354 and Asn-429. The PLAT domain maps to 358–470 (WRYKVSVTLS…EDVLQSLSPC (113 aa)). Cys-454 and Cys-470 are disulfide-bonded.

The protein belongs to the AB hydrolase superfamily. Lipase family. In terms of tissue distribution, pancreas.

The protein localises to the secreted. The protein resides in the zymogen granule membrane. It localises to the cell projection. Its subcellular location is the neuron projection. It carries out the reaction a triacylglycerol + H2O = a diacylglycerol + a fatty acid + H(+). It catalyses the reaction a 1,2-diacyl-3-O-(beta-D-galactosyl)-sn-glycerol + 2 H2O = 3-beta-D-galactosyl-sn-glycerol + 2 a fatty acid + 2 H(+). The enzyme catalyses 1,2,3-tri-(9Z-octadecenoyl)-glycerol + H2O = di-(9Z)-octadecenoylglycerol + (9Z)-octadecenoate + H(+). The catalysed reaction is di-(9Z)-octadecenoylglycerol + H2O = (9Z-octadecenoyl)-glycerol + (9Z)-octadecenoate + H(+). It carries out the reaction (9Z-octadecenoyl)-glycerol + H2O = glycerol + (9Z)-octadecenoate + H(+). It catalyses the reaction 1-(9Z-octadecenoyl)-glycerol + H2O = glycerol + (9Z)-octadecenoate + H(+). The enzyme catalyses 1,2,3-tripropanoylglycerol + H2O = dipropanoylglycerol + propanoate + H(+). The catalysed reaction is 1,2,3-tributanoylglycerol + H2O = dibutanoylglycerol + butanoate + H(+). It carries out the reaction 1,2,3-trioctanoylglycerol + H2O = dioctanoylglycerol + octanoate + H(+). It catalyses the reaction 1,2-didecanoylglycerol + H2O = decanoylglycerol + decanoate + H(+). The enzyme catalyses long chain 1,2-diacyl-3-O-beta-D-galactosyl-sn-glycerol + H2O = long chain acyl-3-O-beta-D-galactosyl-sn-glycerol + a fatty acid + H(+). The catalysed reaction is 1,2-dioctanoyl-3-O-beta-D-galactosyl-sn-glycerol + H2O = octanoyl-3-(beta-D-galactosyl)-sn-glycerol + octanoate + H(+). It carries out the reaction 1,2-didodecanoyl-3-beta-D-galactosyl-sn-glycerol + H2O = dodecanoyl-3-beta-D-galactosyl-sn-glycerol + dodecanoate + H(+). It catalyses the reaction 1-beta-D-galactosyl-2,3-didodecanoyl-sn-glycerol + H2O = 1-beta-D-galactosyl-dodecanoyl-sn-glycerol + dodecanoate + H(+). The enzyme catalyses a 1,2-diacyl-3-O-[alpha-D-galactosyl-(1-&gt;6)-beta-D-galactosyl]-sn-glycerol + H2O = acyl-3-O-[alpha-D-galactosyl-(1-&gt;6)-beta-D-galactosyl]-sn-glycerol + a fatty acid + H(+). The catalysed reaction is long chain 1,2-diacyl-3-O-[alpha-D-galactosyl-(1-&gt;6)-beta-D-galactosyl]-sn-glycerol + H2O = long chain acyl-3-O-[alpha-D-galactosyl-(1-&gt;6)-beta-D-galactosyl]-sn-glycerol + a fatty acid + H(+). It carries out the reaction 1,2-dioctanoyl-3-O-[alpha-D-galactosyl-(1-&gt;6)-beta-D-galactosyl]-sn-glycerol + H2O = octanoyl-3-O-[alpha-D-galactosyl-(1-&gt;6)-beta-D-galactosyl]-sn-glycerol + octanoate + H(+). It catalyses the reaction 1,2-didodecanoyl-3-O-[alpha-D-galactosyl-(1-&gt;6)-beta-D-galactosyl]-sn-glycerol + H2O = dodecanoyl-3-O-[alpha-D-galactosyl-(1-&gt;6)-beta-D-galactosyl]-sn-glycerol + dodecanoate + H(+). The enzyme catalyses a 1,2-diacyl-sn-glycero-3-phosphocholine + H2O = a monoacyl-sn-glycero-3-phosphocholine + a fatty acid + H(+). Its pathway is glycerolipid metabolism; triacylglycerol degradation. It participates in glycolipid metabolism. With respect to regulation, triacylglycerol lipase activity is inhibited by increasing bile salts concentrations and not reactivated by CLPS. Its function is as follows. Lipase that primarily hydrolyzes triglycerides and galactosylglycerides. In neonates, may play a major role in pancreatic digestion of dietary fats such as milk fat globules enriched in long-chain triglycerides. Hydrolyzes short-, medium- and long-chain fatty acyls in triglycerides without apparent positional specificity. Can completely deacylate triacylglycerols. When the liver matures and bile salt synthesis increases, likely functions mainly as a galactolipase and monoacylglycerol lipase. Hydrolyzes monogalactosyldiglycerols (MGDG) and digalactosyldiacylglycerols (DGDG) present in a plant-based diet, releasing long-chain polyunsaturated fatty acids. Hydrolyzes medium- and long-chain fatty acyls in galactolipids. May act together with LIPF to hydrolyze partially digested triglycerides. Hydrolyzes long-chain monoglycerides with high efficiency. In cytotoxic T cells, contributes to perforin-dependent cell lysis, but is unlikely to mediate direct cytotoxicity. Also has low phospholipase activity. In neurons, required for the localization of the phospholipid 1-oleoyl-2-palmitoyl-PC (OPPC) to neurite tips through acyl chain remodeling of membrane phospholipids. The resulting OPPC-rich lipid membrane domain recruits the t-SNARE protein STX4 by selectively interacting with the STX4 transmembrane domain and this promotes surface expression of the dopamine transporter SLC6A3/DAT at neurite tips by facilitating fusion of SLC6A3-containing transport vesicles with the plasma membrane. The sequence is that of Pancreatic lipase-related protein 2 from Myocastor coypus (Coypu).